The chain runs to 161 residues: NADH-quinone oxidoreductase subunit I (161 aa).

2 4Fe-4S ferredoxin-type domains span residues 52–82 (LRRYPNGEERCIACKLCEAICPAMAITIESE) and 92–121 (SRYDIDLTKCIFCGFCEEACPVDAVVETRV). Residues C62, C65, C68, C72, C101, C104, C107, and C111 each contribute to the [4Fe-4S] cluster site.

It belongs to the complex I 23 kDa subunit family. In terms of assembly, NDH-1 is composed of 14 different subunits. Subunits NuoA, H, J, K, L, M, N constitute the membrane sector of the complex. It depends on [4Fe-4S] cluster as a cofactor.

It localises to the cell inner membrane. The enzyme catalyses a quinone + NADH + 5 H(+)(in) = a quinol + NAD(+) + 4 H(+)(out). In terms of biological role, NDH-1 shuttles electrons from NADH, via FMN and iron-sulfur (Fe-S) centers, to quinones in the respiratory chain. The immediate electron acceptor for the enzyme in this species is believed to be ubiquinone. Couples the redox reaction to proton translocation (for every two electrons transferred, four hydrogen ions are translocated across the cytoplasmic membrane), and thus conserves the redox energy in a proton gradient. The protein is NADH-quinone oxidoreductase subunit I of Azoarcus sp. (strain BH72).